The sequence spans 119 residues: Tubulin-specific chaperone A (119 aa).

It belongs to the TBCA family. Supercomplex made of cofactors A to E. Cofactors A and D function by capturing and stabilizing tubulin in a quasi-native conformation. Cofactor E binds to the cofactor D-tubulin complex; interaction with cofactor C then causes the release of tubulin polypeptides that are committed to the native state.

The protein resides in the cytoplasm. It is found in the cytoskeleton. In terms of biological role, required for the maintenance of microtubule structures and cell polarity. Beta-tubulin-folding protein; may have a regulatory role in the tubulin-folding pathway. The chain is Tubulin-specific chaperone A (alp31) from Schizosaccharomyces pombe (strain 972 / ATCC 24843) (Fission yeast).